Here is a 262-residue protein sequence, read N- to C-terminus: Acyl-[acyl-carrier-protein]--UDP-N-acetylglucosamine O-acyltransferase (262 aa).

This sequence belongs to the transferase hexapeptide repeat family. LpxA subfamily. In terms of assembly, homotrimer.

Its subcellular location is the cytoplasm. It catalyses the reaction a (3R)-hydroxyacyl-[ACP] + UDP-N-acetyl-alpha-D-glucosamine = a UDP-3-O-[(3R)-3-hydroxyacyl]-N-acetyl-alpha-D-glucosamine + holo-[ACP]. It participates in glycolipid biosynthesis; lipid IV(A) biosynthesis; lipid IV(A) from (3R)-3-hydroxytetradecanoyl-[acyl-carrier-protein] and UDP-N-acetyl-alpha-D-glucosamine: step 1/6. Its function is as follows. Involved in the biosynthesis of lipid A, a phosphorylated glycolipid that anchors the lipopolysaccharide to the outer membrane of the cell. In Burkholderia multivorans (strain ATCC 17616 / 249), this protein is Acyl-[acyl-carrier-protein]--UDP-N-acetylglucosamine O-acyltransferase.